A 274-amino-acid chain; its full sequence is MRRYLFMVLALCLYRAAPLEAVVIKITDAQAVLKFAREKTLVCFNIEDTVVFPKQMVGQSAWLYNRELDLKTTLSEEQAREQAFLEWMGISFLVDYELVSANLRNVLTGLSLKRSWVLGISQRPVHLIKNTLRILRSFNIDFTSCPAICEDGWLSHPTKDTTFDQAMAIEKNILFVGSLKNGQPMDAALEVLLSGISSPPSQIIYVDQDAERLRSIGAFCKKANIYFIGMLYTPAKQRVESYNPKLTAIQWSQIRKNLSDEYYESLLSYVKSKG.

The N-terminal stretch at 1-21 is a signal peptide; sequence MRRYLFMVLALCLYRAAPLEA.

It is found in the cell outer membrane. The polypeptide is Putative outer membrane protein CPn_1073/CP_0776/CPj1073/CpB1118 (Chlamydia pneumoniae (Chlamydophila pneumoniae)).